A 913-amino-acid chain; its full sequence is Ubiquitin carboxyl-terminal hydrolase 20 (913 aa).

The UBP-type zinc-finger motif lies at 6–111 (DLCPHLDSIG…GSSKFSEQDS (106 aa)). Residues Cys-8, His-10, Cys-30, Cys-33, Cys-43, Cys-48, Cys-53, His-60, His-64, His-70, Cys-83, and Cys-86 each coordinate Zn(2+). Ser-111, Ser-131, and Ser-133 each carry phosphoserine. The 541-residue stretch at 144–684 (TGMKNLGNSC…EGYVLFYRKS (541 aa)) folds into the USP domain. The Nucleophile role is filled by Cys-153. A disordered region spans residues 256–414 (LTEARDSDSS…SSSPPRASPV (159 aa)). A Phosphothreonine modification is found at Thr-257. Positions 258 to 278 (EARDSDSSDTDEKREGDRSPS) are enriched in basic and acidic residues. Ser-304 bears the Phosphoserine mark. The span at 315–331 (EASRAISEKERMKDRKF) shows a compositional bias: basic and acidic residues. The residue at position 367 (Ser-367) is a Phosphoserine. Thr-376 is subject to Phosphothreonine. Residues Ser-407 and Ser-412 each carry the phosphoserine modification. His-642 serves as the catalytic Proton acceptor. DUSP domains follow at residues 686 to 779 (EEAV…LYVC) and 788 to 891 (ALAK…RQSV).

This sequence belongs to the peptidase C19 family. USP20/USP33 subfamily. Interacts with VHL, leading to its ubiquitination and subsequent degradation. Interacts with CCP110. Interacts with DIO2. Interacts with HIF1A. Interacts with ADRB2. Interacts with USP18. Post-translationally, ubiquitinated via a VHL-dependent pathway for proteasomal degradation.

It is found in the cytoplasm. It localises to the endoplasmic reticulum. Its subcellular location is the perinuclear region. The protein localises to the cytoskeleton. The protein resides in the microtubule organizing center. It is found in the centrosome. The enzyme catalyses Thiol-dependent hydrolysis of ester, thioester, amide, peptide and isopeptide bonds formed by the C-terminal Gly of ubiquitin (a 76-residue protein attached to proteins as an intracellular targeting signal).. Its function is as follows. Deubiquitinating enzyme that plays a role in many cellular processes including autophagy, cellular antiviral response or membrane protein biogenesis. Attenuates TLR4-mediated NF-kappa-B signaling by cooperating with beta-arrestin-2/ARRB2 and inhibiting TRAF6 autoubiquitination. Promotes cellular antiviral responses by deconjugating 'Lys-33' and 'Lys-48'-linked ubiquitination of STING1 leading to its stabilization. Plays an essential role in autophagy induction by regulating the ULK1 stability through deubiquitination of ULK1. Acts as a positive regulator for NF-kappa-B activation by TNF-alpha through deubiquitinating 'Lys-48'-linked polyubiquitination of SQSTM1, leading to its increased stability. Acts as a regulator of G-protein coupled receptor (GPCR) signaling by mediating the deubiquitination beta-2 adrenergic receptor (ADRB2). Plays a central role in ADRB2 recycling and resensitization after prolonged agonist stimulation by constitutively binding ADRB2, mediating deubiquitination of ADRB2 and inhibiting lysosomal trafficking of ADRB2. Upon dissociation, it is probably transferred to the translocated beta-arrestins, possibly leading to beta-arrestins deubiquitination and disengagement from ADRB2. This suggests the existence of a dynamic exchange between the ADRB2 and beta-arrestins. Deubiquitinates DIO2, thereby regulating thyroid hormone regulation. Deubiquitinates HIF1A, leading to stabilize HIF1A and enhance HIF1A-mediated activity. Deubiquitinates MCL1, a pivotal member of the anti-apoptotic Bcl-2 protein family to regulate its stability. Within the endoplasmic reticulum, participates with USP33 in the rescue of post-translationally targeted membrane proteins that are inappropriately ubiquitinated by the cytosolic protein quality control in the cytosol. The chain is Ubiquitin carboxyl-terminal hydrolase 20 (USP20) from Pongo abelii (Sumatran orangutan).